The following is a 125-amino-acid chain: Small ribosomal subunit protein uS13 (125 aa).

Residues 91–125 (HRRGLPARGQRTRTNARTRKGKRKTVAGKKKAGKK) form a disordered region.

It belongs to the universal ribosomal protein uS13 family. As to quaternary structure, part of the 30S ribosomal subunit. Forms a loose heterodimer with protein S19. Forms two bridges to the 50S subunit in the 70S ribosome.

Functionally, located at the top of the head of the 30S subunit, it contacts several helices of the 16S rRNA. In the 70S ribosome it contacts the 23S rRNA (bridge B1a) and protein L5 of the 50S subunit (bridge B1b), connecting the 2 subunits; these bridges are implicated in subunit movement. Contacts the tRNAs in the A and P-sites. This is Small ribosomal subunit protein uS13 from Chloroherpeton thalassium (strain ATCC 35110 / GB-78).